A 264-amino-acid chain; its full sequence is Acyl-[acyl-carrier-protein]--UDP-N-acetylglucosamine O-acyltransferase (264 aa).

This sequence belongs to the transferase hexapeptide repeat family. LpxA subfamily. As to quaternary structure, homotrimer.

The protein localises to the cytoplasm. It catalyses the reaction a (3R)-hydroxyacyl-[ACP] + UDP-N-acetyl-alpha-D-glucosamine = a UDP-3-O-[(3R)-3-hydroxyacyl]-N-acetyl-alpha-D-glucosamine + holo-[ACP]. Its pathway is glycolipid biosynthesis; lipid IV(A) biosynthesis; lipid IV(A) from (3R)-3-hydroxytetradecanoyl-[acyl-carrier-protein] and UDP-N-acetyl-alpha-D-glucosamine: step 1/6. Involved in the biosynthesis of lipid A, a phosphorylated glycolipid that anchors the lipopolysaccharide to the outer membrane of the cell. The polypeptide is Acyl-[acyl-carrier-protein]--UDP-N-acetylglucosamine O-acyltransferase (Leptothrix cholodnii (strain ATCC 51168 / LMG 8142 / SP-6) (Leptothrix discophora (strain SP-6))).